Reading from the N-terminus, the 624-residue chain is MTQAEKGDTENGKEKGGEKEKEQRGVKRPIVPALVPESLQEQIQSNFIIVIHPGSTTLRIGRATDTLPASIPHVIARRHKQQGQPLYKDSWLLREGLNKPESNEQRQNGLKMVDQAIWSKKMSNGTRRIPVSPEQARSYNKQMRPAILDHCSGNKWTNTSHHPEYLVGEEALYVNPLDCYNIHWPIRRGQLNIHPGPGGSLTAVLADIEVIWSHAIQKYLEIPLKDLKYYRCILLIPDIYNKQHVKELVNMILMKMGFSGIVVHQESVCATYGSGLSSTCIVDVGDQKTSVCCVEDGVSHRNTRLCLAYGGSDVSRCFYWLMQRAGFPYRECQLTNKMDCLLLQHLKETFCHLDQDISGLQDHEFQIRHPDSPALLYQFRLGDEKLQAPMALFYPATFGIVGQKMTTLQHRSQGDPEDPHDEHYLLATQSKQEQSAKATADRKSASKPIGFEGDLRGQSSDLPERLHSQEVDLGSAQGDGLMAGNDSEEALTALMSRKTAISLFEGKALGLDKAILHSIDCCSSDDTKKKMYSSILVVGGGLMFHKAQEFLQHRILNKMPPSFRRIIENVDVITRPKDMDPRLIAWKGGAVLACLDTTQELWIYQREWQRFGVRMLRERAAFVW.

N-acetylmethionine is present on M1. Residues 1 to 25 (MTQAEKGDTENGKEKGGEKEKEQRG) are compositionally biased toward basic and acidic residues. Residues 1–29 (MTQAEKGDTENGKEKGGEKEKEQRGVKRP) are disordered. 2 residues coordinate ATP: S55 and T56. S132 bears the Phosphoserine mark. An ATP-binding site is contributed by 283 to 286 (DVGD). S412 carries the phosphoserine modification. The segment at 430–462 (SKQEQSAKATADRKSASKPIGFEGDLRGQSSDL) is disordered.

This sequence belongs to the actin family. ARP8 subfamily. In terms of assembly, component of the chromatin remodeling INO80 complex; specifically part of a complex module associated with the DBINO domain of INO80. Interacts with ACTR5; the interaction is observed in asynchronous (interphase) cells but not in metaphase-arrested cells indicative for a possible dissociation of the INO80 complex in mitotic cells. Exists as monomers and dimers, but the dimer is most probably the biologically relevant form required for stable interactions with histones that exploits the twofold symmetry of the nucleosome core.

The protein resides in the nucleus. It is found in the chromosome. In terms of biological role, plays an important role in the functional organization of mitotic chromosomes. Exhibits low basal ATPase activity, and unable to polymerize. Functionally, proposed core component of the chromatin remodeling INO80 complex which is involved in transcriptional regulation, DNA replication and probably DNA repair. Required for the recruitment of INO80 (and probably the INO80 complex) to sites of DNA damage. Strongly prefer nucleosomes and H3-H4 tetramers over H2A-H2B dimers, suggesting it may act as a nucleosome recognition module within the complex. This is Actin-related protein 8 (ACTR8) from Homo sapiens (Human).